A 250-amino-acid polypeptide reads, in one-letter code: 1-(5-phosphoribosyl)-5-[(5-phosphoribosylamino)methylideneamino] imidazole-4-carboxamide isomerase (250 aa).

The active-site Proton acceptor is the aspartate 12. Aspartate 134 acts as the Proton donor in catalysis.

This sequence belongs to the HisA/HisF family.

It is found in the cytoplasm. It carries out the reaction 1-(5-phospho-beta-D-ribosyl)-5-[(5-phospho-beta-D-ribosylamino)methylideneamino]imidazole-4-carboxamide = 5-[(5-phospho-1-deoxy-D-ribulos-1-ylimino)methylamino]-1-(5-phospho-beta-D-ribosyl)imidazole-4-carboxamide. Its pathway is amino-acid biosynthesis; L-histidine biosynthesis; L-histidine from 5-phospho-alpha-D-ribose 1-diphosphate: step 4/9. The polypeptide is 1-(5-phosphoribosyl)-5-[(5-phosphoribosylamino)methylideneamino] imidazole-4-carboxamide isomerase (Actinobacillus pleuropneumoniae serotype 5b (strain L20)).